The sequence spans 118 residues: NADPH-dependent 7-cyano-7-deazaguanine reductase (118 aa).

The active-site Thioimide intermediate is Cys-31. Asp-38 functions as the Proton donor in the catalytic mechanism. Residues 53-55 (IEL) and 72-73 (YE) each bind substrate.

The protein belongs to the GTP cyclohydrolase I family. QueF type 1 subfamily.

It is found in the cytoplasm. It catalyses the reaction 7-aminomethyl-7-carbaguanine + 2 NADP(+) = 7-cyano-7-deazaguanine + 2 NADPH + 3 H(+). It functions in the pathway tRNA modification; tRNA-queuosine biosynthesis. Functionally, catalyzes the NADPH-dependent reduction of 7-cyano-7-deazaguanine (preQ0) to 7-aminomethyl-7-deazaguanine (preQ1). This is NADPH-dependent 7-cyano-7-deazaguanine reductase from Prosthecochloris aestuarii (strain DSM 271 / SK 413).